Reading from the N-terminus, the 111-residue chain is Secreted RxLR effector protein 82 (111 aa).

Positions 1–17 (MFHLYLLLVFETRYTCL) are cleaved as a signal peptide. The RxLR motif lies at 28-31 (RWLR).

It belongs to the RxLR effector family.

Its subcellular location is the secreted. It is found in the host nucleus. Its function is as follows. Secreted effector that acts as an elicitor that induces cell death in host plant cells. In Plasmopara viticola (Downy mildew of grapevine), this protein is Secreted RxLR effector protein 82.